The following is a 333-amino-acid chain: Ketol-acid reductoisomerase (NADP(+)) (333 aa).

One can recognise a KARI N-terminal Rossmann domain in the interval 1-171 (MSNDTQPKIA…GGARANIIKT (171 aa)). Residues 14 to 17 (YGSQ), R37, T42, and 72 to 75 (DMVQ) contribute to the NADP(+) site. The active site involves H97. G123 contacts NADP(+). In terms of domain architecture, KARI C-terminal knotted spans 172 to 317 (TFKEETETDL…KKLRAKMVWL (146 aa)). Residues D180, E184, E216, and E220 each coordinate Mg(2+). S241 is a binding site for substrate.

Belongs to the ketol-acid reductoisomerase family. Mg(2+) is required as a cofactor.

It catalyses the reaction (2R)-2,3-dihydroxy-3-methylbutanoate + NADP(+) = (2S)-2-acetolactate + NADPH + H(+). It carries out the reaction (2R,3R)-2,3-dihydroxy-3-methylpentanoate + NADP(+) = (S)-2-ethyl-2-hydroxy-3-oxobutanoate + NADPH + H(+). The protein operates within amino-acid biosynthesis; L-isoleucine biosynthesis; L-isoleucine from 2-oxobutanoate: step 2/4. It functions in the pathway amino-acid biosynthesis; L-valine biosynthesis; L-valine from pyruvate: step 2/4. Involved in the biosynthesis of branched-chain amino acids (BCAA). Catalyzes an alkyl-migration followed by a ketol-acid reduction of (S)-2-acetolactate (S2AL) to yield (R)-2,3-dihydroxy-isovalerate. In the isomerase reaction, S2AL is rearranged via a Mg-dependent methyl migration to produce 3-hydroxy-3-methyl-2-ketobutyrate (HMKB). In the reductase reaction, this 2-ketoacid undergoes a metal-dependent reduction by NADPH to yield (R)-2,3-dihydroxy-isovalerate. This chain is Ketol-acid reductoisomerase (NADP(+)), found in Xanthomonas euvesicatoria pv. vesicatoria (strain 85-10) (Xanthomonas campestris pv. vesicatoria).